Here is a 185-residue protein sequence, read N- to C-terminus: Gastrokine-1 (185 aa).

The first 20 residues, 1-20 (MKFTIVFAGLLGVFLAPALA), serve as a signal peptide directing secretion. The region spanning 54–150 (NNGWDSWNSI…MCRGIPTYMA (97 aa)) is the BRICHOS domain. C81 and C142 are joined by a disulfide.

It belongs to the gastrokine family. Expressed in stomach (at protein level). No expression is detected in cancer tissue or gastric cancer cell lines.

It is found in the secreted. It localises to the cytoplasmic granule. The protein resides in the golgi apparatus. Its function is as follows. Has mitogenic activity and may be involved in maintaining the integrity of the gastric mucosal epithelium. The polypeptide is Gastrokine-1 (GKN1) (Homo sapiens (Human)).